Consider the following 175-residue polypeptide: NADH-ubiquinone oxidoreductase chain 6 (175 aa).

A run of 5 helical transmembrane segments spans residues 1 to 21, 25 to 45, 48 to 68, 88 to 108, and 149 to 169; these read MMTY…VGFS, SPIY…GIVL, GGSF…LVVF, TVLS…GYCI, and YGTW…LVVM.

The protein belongs to the complex I subunit 6 family. Core subunit of respiratory chain NADH dehydrogenase (Complex I) which is composed of 45 different subunits.

It localises to the mitochondrion inner membrane. It catalyses the reaction a ubiquinone + NADH + 5 H(+)(in) = a ubiquinol + NAD(+) + 4 H(+)(out). Its function is as follows. Core subunit of the mitochondrial membrane respiratory chain NADH dehydrogenase (Complex I) which catalyzes electron transfer from NADH through the respiratory chain, using ubiquinone as an electron acceptor. Essential for the catalytic activity and assembly of complex I. This chain is NADH-ubiquinone oxidoreductase chain 6 (MT-ND6), found in Urotrichus talpoides (Japanese shrew mole).